A 306-amino-acid polypeptide reads, in one-letter code: Putative S-adenosyl-L-methionine-dependent methyltransferase MAV_4442 (306 aa).

S-adenosyl-L-methionine-binding positions include Asp-129 and 158–159 (DL).

The protein belongs to the UPF0677 family.

Exhibits S-adenosyl-L-methionine-dependent methyltransferase activity. The polypeptide is Putative S-adenosyl-L-methionine-dependent methyltransferase MAV_4442 (Mycobacterium avium (strain 104)).